A 596-amino-acid polypeptide reads, in one-letter code: Nucleotidyltransferase lcsQ (596 aa).

The N-terminal 22 residues, 1–22 (MLLRLSPSRMALKRKLDSFLRN), are a transit peptide targeting the mitochondrion. Residues 475-504 (IVAHPGKPSQPADVPETPLSSGASKSKNLD) form a disordered region.

The protein belongs to the tRNA nucleotidyltransferase/poly(A) polymerase family.

The protein resides in the mitochondrion. Its function is as follows. Nucleotidyltransferase; part of the gene cluster that mediates the biosynthesis of the lipopeptide antibiotics leucinostatins that show extensive biological activities, including antimalarial, antiviral, antibacterial, antifungal, and antitumor activities, as well as phytotoxic. The function of lcsQ within the leucinostatins biosynthesis has not been identified yet. This is Nucleotidyltransferase lcsQ from Purpureocillium lilacinum (Paecilomyces lilacinus).